We begin with the raw amino-acid sequence, 282 residues long: 4-hydroxybenzoate octaprenyltransferase (282 aa).

The next 9 membrane-spanning stretches (helical) occupy residues 17 to 37 (IGIL…NQGF), 40 to 60 (IDLL…GCVI), 90 to 110 (AFIL…KLPI), 113 to 133 (FYFA…KRFF), 135 to 155 (APQL…FIAS), 163 to 183 (FIVL…MYAM), 207 to 227 (LIIA…AINK), 231 to 251 (CFFY…LKLI), and 262 to 282 (AFLV…LALI).

It belongs to the UbiA prenyltransferase family. The cofactor is Mg(2+).

It localises to the cell inner membrane. It carries out the reaction all-trans-octaprenyl diphosphate + 4-hydroxybenzoate = 4-hydroxy-3-(all-trans-octaprenyl)benzoate + diphosphate. The protein operates within cofactor biosynthesis; ubiquinone biosynthesis. Its function is as follows. Catalyzes the prenylation of para-hydroxybenzoate (PHB) with an all-trans polyprenyl group. Mediates the second step in the final reaction sequence of ubiquinone-8 (UQ-8) biosynthesis, which is the condensation of the polyisoprenoid side chain with PHB, generating the first membrane-bound Q intermediate 3-octaprenyl-4-hydroxybenzoate. This is 4-hydroxybenzoate octaprenyltransferase from Legionella pneumophila (strain Lens).